The primary structure comprises 205 residues: Large ribosomal subunit protein bL17c (205 aa).

The transit peptide at Met1–Ala89 directs the protein to the chloroplast.

This sequence belongs to the bacterial ribosomal protein bL17 family. In terms of assembly, part of the 50S ribosomal subunit.

The protein localises to the plastid. Its subcellular location is the chloroplast. Its function is as follows. This protein binds directly to 23S ribosomal RNA. The chain is Large ribosomal subunit protein bL17c (RPL17) from Nicotiana tabacum (Common tobacco).